The primary structure comprises 547 residues: Chaperonin GroEL (547 aa).

Residues 30 to 33 (TLGP), K51, 87 to 91 (DGTTT), G415, and D496 each bind ATP. A disordered region spans residues 527-547 (SDKEEPMPMRGGMGGMGGMDF). Positions 537–547 (GGMGGMGGMDF) are enriched in gly residues.

The protein belongs to the chaperonin (HSP60) family. In terms of assembly, forms a cylinder of 14 subunits composed of two heptameric rings stacked back-to-back. Interacts with the co-chaperonin GroES.

It localises to the cytoplasm. It carries out the reaction ATP + H2O + a folded polypeptide = ADP + phosphate + an unfolded polypeptide.. Functionally, together with its co-chaperonin GroES, plays an essential role in assisting protein folding. The GroEL-GroES system forms a nano-cage that allows encapsulation of the non-native substrate proteins and provides a physical environment optimized to promote and accelerate protein folding. This is Chaperonin GroEL from Rickettsia massiliae (strain Mtu5).